Here is a 176-residue protein sequence, read N- to C-terminus: Dual-action ribosomal maturation protein DarP (176 aa).

Positions 1–16 (MRLIDPDADLEFDPDS) are enriched in acidic residues. The interval 1–29 (MRLIDPDADLEFDPDSVYDGPSKSQKKRE) is disordered.

Belongs to the DarP family.

It is found in the cytoplasm. Member of a network of 50S ribosomal subunit biogenesis factors which assembles along the 30S-50S interface, preventing incorrect 23S rRNA structures from forming. Promotes peptidyl transferase center (PTC) maturation. This chain is Dual-action ribosomal maturation protein DarP, found in Thiobacillus denitrificans (strain ATCC 25259 / T1).